Reading from the N-terminus, the 263-residue chain is Phosphoinositide-3-kinase-interacting protein 1 (263 aa).

A signal peptide spans 1-21 (MLLAWVQAFLVSNMLLAEAYG). At 22–168 (SGGCFWDNGH…NSKEKKDLGT (147 aa)) the chain is on the extracellular side. The region spanning 24–101 (GCFWDNGHLY…EKRPCEDLRC (78 aa)) is the Kringle domain. 3 disulfides stabilise this stretch: Cys25–Cys101, Cys46–Cys82, and Cys70–Cys96. The O-linked (GalNAc...) serine glycan is linked to Ser39. Asn66 carries an N-linked (GlcNAc...) (complex) asparagine glycan. A helical membrane pass occupies residues 169-189 (LGYVLGITMMVIIIAIGAGII). The Cytoplasmic portion of the chain corresponds to 190 to 263 (LGYSYKRGKD…LMGQAGTPGA (74 aa)). Polar residues predominate over residues 242–251 (QTPVDPQEGT). Residues 242-263 (QTPVDPQEGTTPLMGQAGTPGA) are disordered.

In terms of processing, N- and O-glycosylated. O-glycosylated with core 1 or possibly core 8 glycans. N-glycan heterogeneity at Asn-66: dHex1Hex5HexNAc4 (major) and dHex1Hex6HexNAc5 (minor).

The protein resides in the cell membrane. Functionally, negative regulator of hepatic phosphatidylinositol 3-kinase (PI3K) activity. The sequence is that of Phosphoinositide-3-kinase-interacting protein 1 (PIK3IP1) from Homo sapiens (Human).